A 41-amino-acid chain; its full sequence is Photosystem I reaction center subunit IX (41 aa).

Residues 7–27 (YLSTAPVLATVWMIITAGILI) traverse the membrane as a helical segment.

This sequence belongs to the PsaJ family.

The protein localises to the cellular thylakoid membrane. Functionally, may help in the organization of the PsaE and PsaF subunits. This chain is Photosystem I reaction center subunit IX, found in Trichodesmium erythraeum (strain IMS101).